Consider the following 817-residue polypeptide: Leucine--tRNA ligase (817 aa).

The 'HIGH' region signature appears at 40–50 (PYPSGKLHMGH). The 'KMSKS' region motif lies at 578-582 (KMSKS). Residue K581 participates in ATP binding.

The protein belongs to the class-I aminoacyl-tRNA synthetase family.

The protein resides in the cytoplasm. The enzyme catalyses tRNA(Leu) + L-leucine + ATP = L-leucyl-tRNA(Leu) + AMP + diphosphate. The sequence is that of Leucine--tRNA ligase from Caldicellulosiruptor saccharolyticus (strain ATCC 43494 / DSM 8903 / Tp8T 6331).